Consider the following 473-residue polypeptide: ATP synthase subunit beta (473 aa).

158–165 (GGAGVGKT) contributes to the ATP binding site.

This sequence belongs to the ATPase alpha/beta chains family. In terms of assembly, F-type ATPases have 2 components, CF(1) - the catalytic core - and CF(0) - the membrane proton channel. CF(1) has five subunits: alpha(3), beta(3), gamma(1), delta(1), epsilon(1). CF(0) has three main subunits: a(1), b(2) and c(9-12). The alpha and beta chains form an alternating ring which encloses part of the gamma chain. CF(1) is attached to CF(0) by a central stalk formed by the gamma and epsilon chains, while a peripheral stalk is formed by the delta and b chains. The F(1)F(0) complex interacts with SpoIIIJ and YqjG; YqgA is found in the same complex.

It is found in the cell membrane. The protein localises to the membrane raft. The enzyme catalyses ATP + H2O + 4 H(+)(in) = ADP + phosphate + 5 H(+)(out). Functionally, produces ATP from ADP in the presence of a proton gradient across the membrane. The catalytic sites are hosted primarily by the beta subunits. The protein is ATP synthase subunit beta of Bacillus subtilis (strain 168).